The chain runs to 156 residues: E3 ubiquitin-protein ligase RNF181 (156 aa).

The RING-type; atypical zinc-finger motif lies at 79 to 120 (CPVCLLEFEEQESVREMPCKHLFHTGCILPWLNKTNSCPLCR). A disordered region spans residues 135–156 (KDKERRRQREHRLEDLHGAMYT).

It belongs to the RNF181 family.

It catalyses the reaction S-ubiquitinyl-[E2 ubiquitin-conjugating enzyme]-L-cysteine + [acceptor protein]-L-lysine = [E2 ubiquitin-conjugating enzyme]-L-cysteine + N(6)-ubiquitinyl-[acceptor protein]-L-lysine.. It participates in protein modification; protein ubiquitination. E3 ubiquitin-protein ligase which accepts ubiquitin from an E2 ubiquitin-conjugating enzyme in the form of a thioester and then directly transfers the ubiquitin to targeted substrates. Catalyzes monoubiquitination of 26S proteasome subunit PSMC2/RPT1. The sequence is that of E3 ubiquitin-protein ligase RNF181 (rnf181) from Danio rerio (Zebrafish).